A 242-amino-acid chain; its full sequence is Carboxy-S-adenosyl-L-methionine synthase (242 aa).

Residues Tyr-39, 64-66 (GCS), 89-90 (DN), 117-118 (DI), Asn-132, and Arg-199 contribute to the S-adenosyl-L-methionine site.

Belongs to the class I-like SAM-binding methyltransferase superfamily. Cx-SAM synthase family. In terms of assembly, homodimer.

The catalysed reaction is prephenate + S-adenosyl-L-methionine = carboxy-S-adenosyl-L-methionine + 3-phenylpyruvate + H2O. Catalyzes the conversion of S-adenosyl-L-methionine (SAM) to carboxy-S-adenosyl-L-methionine (Cx-SAM). The chain is Carboxy-S-adenosyl-L-methionine synthase from Aliivibrio fischeri (strain ATCC 700601 / ES114) (Vibrio fischeri).